Reading from the N-terminus, the 172-residue chain is Large ribosomal subunit protein uL10 (172 aa).

This sequence belongs to the universal ribosomal protein uL10 family. In terms of assembly, part of the ribosomal stalk of the 50S ribosomal subunit. The N-terminus interacts with L11 and the large rRNA to form the base of the stalk. The C-terminus forms an elongated spine to which L12 dimers bind in a sequential fashion forming a multimeric L10(L12)X complex.

Functionally, forms part of the ribosomal stalk, playing a central role in the interaction of the ribosome with GTP-bound translation factors. The protein is Large ribosomal subunit protein uL10 of Brucella suis biovar 1 (strain 1330).